Consider the following 342-residue polypeptide: Methionyl-tRNA formyltransferase (342 aa).

Residue 110-113 (SLLP) participates in (6S)-5,6,7,8-tetrahydrofolate binding.

It belongs to the Fmt family.

The catalysed reaction is L-methionyl-tRNA(fMet) + (6R)-10-formyltetrahydrofolate = N-formyl-L-methionyl-tRNA(fMet) + (6S)-5,6,7,8-tetrahydrofolate + H(+). Its function is as follows. Attaches a formyl group to the free amino group of methionyl-tRNA(fMet). The formyl group appears to play a dual role in the initiator identity of N-formylmethionyl-tRNA by promoting its recognition by IF2 and preventing the misappropriation of this tRNA by the elongation apparatus. This Synechococcus sp. (strain CC9311) protein is Methionyl-tRNA formyltransferase.